The following is a 398-amino-acid chain: Acetate kinase 1 (398 aa).

Residue Asn-9 coordinates Mg(2+). Lys-16 serves as a coordination point for ATP. Arg-89 contacts substrate. Residue Asp-146 is the Proton donor/acceptor of the active site. ATP contacts are provided by residues 206–210 (HLGNG), 281–283 (DCR), and 329–333 (GIGEN). Glu-384 is a Mg(2+) binding site.

Belongs to the acetokinase family. As to quaternary structure, homodimer. Requires Mg(2+) as cofactor. It depends on Mn(2+) as a cofactor.

The protein resides in the cytoplasm. It catalyses the reaction acetate + ATP = acetyl phosphate + ADP. The protein operates within metabolic intermediate biosynthesis; acetyl-CoA biosynthesis; acetyl-CoA from acetate: step 1/2. Its function is as follows. Catalyzes the formation of acetyl phosphate from acetate and ATP. Can also catalyze the reverse reaction. This Vibrio cholerae serotype O1 (strain ATCC 39315 / El Tor Inaba N16961) protein is Acetate kinase 1.